The primary structure comprises 271 residues: Indole-3-glycerol phosphate synthase (271 aa).

The protein belongs to the TrpC family.

The enzyme catalyses 1-(2-carboxyphenylamino)-1-deoxy-D-ribulose 5-phosphate + H(+) = (1S,2R)-1-C-(indol-3-yl)glycerol 3-phosphate + CO2 + H2O. It participates in amino-acid biosynthesis; L-tryptophan biosynthesis; L-tryptophan from chorismate: step 4/5. In Lachnoclostridium phytofermentans (strain ATCC 700394 / DSM 18823 / ISDg) (Clostridium phytofermentans), this protein is Indole-3-glycerol phosphate synthase.